Here is a 377-residue protein sequence, read N- to C-terminus: Flagellin C (377 aa).

2 coiled-coil regions span residues 103–129 and 301–340; these read SNSK…IAET and VDSH…KDTD.

This sequence belongs to the bacterial flagellin family. In terms of assembly, heteromer of multiple flagellin subunits including FlaA, FlaB, FlaC, FlaD and possibly FlaE.

The protein resides in the secreted. It localises to the bacterial flagellum. Flagellin is the subunit protein which polymerizes to form the filaments of bacterial flagella. FlaC is not essential for flagellar synthesis and motility. The protein is Flagellin C (flaC) of Vibrio anguillarum (Listonella anguillarum).